The following is a 153-amino-acid chain: Endoribonuclease YbeY (153 aa).

His-116, His-120, and His-126 together coordinate Zn(2+).

It belongs to the endoribonuclease YbeY family. Requires Zn(2+) as cofactor.

It is found in the cytoplasm. In terms of biological role, single strand-specific metallo-endoribonuclease involved in late-stage 70S ribosome quality control and in maturation of the 3' terminus of the 16S rRNA. In Paraburkholderia phymatum (strain DSM 17167 / CIP 108236 / LMG 21445 / STM815) (Burkholderia phymatum), this protein is Endoribonuclease YbeY.